Reading from the N-terminus, the 395-residue chain is Zinc finger protein 385D (395 aa).

The Matrin-type 1 zinc finger occupies 80 to 110 (ISCNICQLRFNSDSQAAAHYKGTKHAKKLKA). Positions 169-193 (MTTEITSKVEKSPTTATGNSSCPST) are enriched in polar residues. The interval 169–194 (MTTEITSKVEKSPTTATGNSSCPSTE) is disordered. 2 consecutive Matrin-type zinc fingers follow at residues 204 to 234 (LYCSLCKVAVNSASQLEAHNSGTKHKTMLEA) and 267 to 297 (FHCEICDVHVNSETQLKQHISSRRHKDRAAG). The tract at residues 282-309 (LKQHISSRRHKDRAAGKPPKPKYSPYNK) is disordered.

The protein localises to the nucleus. The sequence is that of Zinc finger protein 385D (ZNF385D) from Homo sapiens (Human).